Reading from the N-terminus, the 98-residue chain is MIHDYHWRRGKRRKLIVMMETRMMIIMMTIKPPHDIYREQQNHHDDETKRSTKHCVTATHPWPRPAASCFRCPLRGGHHRRRPACALPHGWSVMNSCS.

This is an uncharacterized protein from Human cytomegalovirus (strain AD169) (HHV-5).